We begin with the raw amino-acid sequence, 215 residues long: Cytochrome b6 (215 aa).

A helical membrane pass occupies residues 32-52; the sequence is IFYCFGGITFTCFLVQVATGF. Cys-35 serves as a coordination point for heme c. Heme b-binding residues include His-86 and His-100. Transmembrane regions (helical) follow at residues 90–110, 116–136, and 186–206; these read ASMMVLMMILHIFRVYLTGGF, LTWVTGVLMAVCTVSFGVTGY, and LHTFVLPLFTAVFMLMHFLMI. Heme b is bound by residues His-187 and His-202.

It belongs to the cytochrome b family. PetB subfamily. As to quaternary structure, the 4 large subunits of the cytochrome b6-f complex are cytochrome b6, subunit IV (17 kDa polypeptide, PetD), cytochrome f and the Rieske protein, while the 4 small subunits are PetG, PetL, PetM and PetN. The complex functions as a dimer. Heme b serves as cofactor. It depends on heme c as a cofactor.

The protein resides in the plastid. It is found in the chloroplast thylakoid membrane. Functionally, component of the cytochrome b6-f complex, which mediates electron transfer between photosystem II (PSII) and photosystem I (PSI), cyclic electron flow around PSI, and state transitions. This is Cytochrome b6 from Auxenochlorella protothecoides (Green microalga).